The following is a 613-amino-acid chain: Apoptosis-inducing factor 1, mitochondrial (613 aa).

2 short sequence motifs (mitochondrial localization signal) span residues 1–31 (MFRC…PRQR) and 63–89 (KIDN…KTMK). The transit peptide at 1 to 54 (MFRCGGLAAGALKQKLVPLVRTVCVRSPRQRNRLPGNLFQRWHVPLELQMTRQM) directs the protein to the mitochondrion. Residues 55-101 (ASSGASGGKIDNSVLVLIVGLSTVGAGAYAYKTMKEDEKRYNERISG) constitute a propeptide, removed in mature form. The disordered stretch occupies residues 100 to 127 (SGLGLTPEQKQKKAALSASEGEEVPQDK). T105 carries the post-translational modification Phosphothreonine. K109 is subject to N6-succinyllysine. Residues S116 and S118 each carry the phosphoserine modification. An FAD-dependent oxidoreductase region spans residues 134-483 (FLLIGGGTAA…KPYWHQSMFW (350 aa)). FAD-binding positions include 138-142 (GGGTA), 164-165 (ED), R172, and K177. W196 serves as a coordination point for NAD(+). V233 provides a ligand contact to FAD. Residue K255 forms a Glycyl lysine isopeptide (Lys-Gly) (interchain with G-Cter in ubiquitin) linkage. A Phosphoserine modification is found at S268. R285 contributes to the FAD binding site. S292 is subject to Phosphoserine. Residues 308–311 (GGFL), E336, and K342 contribute to the NAD(+) site. S371 carries the phosphoserine modification. Residue K388 is modified to N6-acetyllysine. G399 is an NAD(+) binding site. D438 is a binding site for FAD. Positions 446–451 (KLGRRR) match the Nuclear localization signal motif. Residues 453–454 (EH), W483, and E493 each bind NAD(+). Residues 454–455 (HH) and W483 each bind FAD. Residues 513–529 (AQDNPKSATEQSGTGIR) show a composition bias toward polar residues. The interval 513-554 (AQDNPKSATEQSGTGIRSESETESEASEITIPPSTPAVPQAP) is disordered. Position 521 is a phosphothreonine (T521). Residues S524 and S530 each carry the phosphoserine modification. N583 is a binding site for NAD(+). Position 593 is an N6-acetyllysine (K593).

Belongs to the FAD-dependent oxidoreductase family. In terms of assembly, monomer (oxidized form). Homodimer (reduced form). Upon reduction with NADH, undergoes dimerization and forms tight, long-lived FADH2-NAD charge transfer complexes (CTC) resistant to oxidation. Also dimerizes with isoform 3 preventing its release from mitochondria. Interacts with XIAP/BIRC4. Interacts (via N-terminus) with EIF3G (via C-terminus). Interacts with PRELID1. Interacts with CHCHD4; the interaction increases in presence of NADH. Interacts with processed form of PARP1 (Poly [ADP-ribose] polymerase 1, processed C-terminus); interaction is mediated with poly-ADP-ribose chains attached to PARP1, promoting translocation into the nucleus. FAD is required as a cofactor. In terms of processing, under normal conditions, a 54-residue N-terminal segment is first proteolytically removed during or just after translocation into the mitochondrial intermembrane space (IMS) by the mitochondrial processing peptidase (MPP) to form the inner-membrane-anchored mature form (AIFmit). During apoptosis, it is further proteolytically processed at amino-acid position 101 leading to the generation of the mature form, which is confined to the mitochondrial IMS in a soluble form (AIFsol). AIFsol is released to the cytoplasm in response to specific death signals, and translocated to the nucleus, where it induces nuclear apoptosis in a caspase-independent manner. Ubiquitination by XIAP/BIRC4 does not lead to proteasomal degradation. Ubiquitination at Lys-255 by XIAP/BIRC4 blocks its ability to bind DNA and induce chromatin degradation, thereby inhibiting its ability to induce cell death. In terms of tissue distribution, expressed in all tested tissues. Detected in muscle and skin fibroblasts (at protein level). Expressed in osteoblasts (at protein level). As to expression, brain specific. Expressed in all tested tissues except brain. In terms of tissue distribution, isoform 5 is frequently down-regulated in human cancers.

It localises to the mitochondrion intermembrane space. The protein localises to the mitochondrion inner membrane. The protein resides in the cytoplasm. It is found in the nucleus. Its subcellular location is the perinuclear region. It localises to the mitochondrion. The protein localises to the cytosol. The enzyme catalyses A + NADH + H(+) = AH2 + NAD(+). Functions both as NADH oxidoreductase and as regulator of apoptosis. In response to apoptotic stimuli, it is released from the mitochondrion intermembrane space into the cytosol and to the nucleus, where it functions as a proapoptotic factor in a caspase-independent pathway. Release into the cytoplasm is mediated upon binding to poly-ADP-ribose chains. The soluble form (AIFsol) found in the nucleus induces 'parthanatos' i.e. caspase-independent fragmentation of chromosomal DNA. Binds to DNA in a sequence-independent manner. Interacts with EIF3G, and thereby inhibits the EIF3 machinery and protein synthesis, and activates caspase-7 to amplify apoptosis. Plays a critical role in caspase-independent, pyknotic cell death in hydrogen peroxide-exposed cells. In contrast, participates in normal mitochondrial metabolism. Plays an important role in the regulation of respiratory chain biogenesis by interacting with CHCHD4 and controlling CHCHD4 mitochondrial import. Its function is as follows. Has NADH oxidoreductase activity. Does not induce nuclear apoptosis. In terms of biological role, pro-apoptotic isoform. In Homo sapiens (Human), this protein is Apoptosis-inducing factor 1, mitochondrial.